Reading from the N-terminus, the 128-residue chain is Small ribosomal subunit protein uS11m (128 aa).

This sequence belongs to the universal ribosomal protein uS11 family.

The protein resides in the mitochondrion. This chain is Small ribosomal subunit protein uS11m (RPS11), found in Prototheca wickerhamii.